We begin with the raw amino-acid sequence, 364 residues long: Probable transcription factor At4g00390 (364 aa).

The tract at residues 1–149 is disordered; sequence MTKKLDPPTA…STKRVKKDEE (149 aa). A compositionally biased stretch (acidic residues) spans 13-32; the sequence is SDEDDVETSEDDSSSSEEDE. The span at 39–80 shows a compositional bias: low complexity; that stretch reads ATTAAAPAKSTAVSAATPAKSTSVSAAAPSKSTAVSAAADSD. Acidic residues predominate over residues 81-93; sequence SGSESETDSDSES.

The protein belongs to the GeBP family.

This Arabidopsis thaliana (Mouse-ear cress) protein is Probable transcription factor At4g00390.